Consider the following 224-residue polypeptide: Ribose-5-phosphate isomerase A (224 aa).

Substrate contacts are provided by residues 26–29 (TGST), 82–85 (DGAD), and 95–98 (KGGG). E104 functions as the Proton acceptor in the catalytic mechanism. K122 lines the substrate pocket.

This sequence belongs to the ribose 5-phosphate isomerase family. Homodimer.

It carries out the reaction aldehydo-D-ribose 5-phosphate = D-ribulose 5-phosphate. It participates in carbohydrate degradation; pentose phosphate pathway; D-ribose 5-phosphate from D-ribulose 5-phosphate (non-oxidative stage): step 1/1. Functionally, catalyzes the reversible conversion of ribose-5-phosphate to ribulose 5-phosphate. This Streptococcus suis (strain 98HAH33) protein is Ribose-5-phosphate isomerase A.